The primary structure comprises 49 residues: Large ribosomal subunit protein bL33 (49 aa).

It belongs to the bacterial ribosomal protein bL33 family.

The sequence is that of Large ribosomal subunit protein bL33 from Leuconostoc citreum (strain KM20).